The sequence spans 575 residues: Transcription factor COE2 (575 aa).

The interaction with DNA stretch occupies residues 62–65 (RKSN). The segment at 150 to 169 (CRVLLTHEVMCSRCCEKKSC) adopts a C5-type zinc-finger fold. 2 interaction with DNA regions span residues 196-203 (NCLKTAGN) and 235-238 (NNSK). The IPT/TIG domain occupies 253–336 (PCIKAISPSE…KGAPGRFIYT (84 aa)). Polar residues predominate over residues 441–453 (STQGNNQGYIRNT). The disordered stretch occupies residues 441–479 (STQGNNQGYIRNTSSISPRGYSSSSTPQQSNYSTSSNSM). Residues 454–479 (SSISPRGYSSSSTPQQSNYSTSSNSM) are compositionally biased toward low complexity.

It belongs to the COE family. Forms either a homodimer or a heterodimer with a related family member. Interacts with SIX1. As to expression, in adult expressed in olfactory epithelium and at a much lower level in Purkinje cells of the cerebellum. In embryo expressed in epithalamus, in cells near the ventricular zone of mesencephalon and on the ventral surface of rhombencephalon, in the developing vomeronasal organ, at a lower level in developing spinal cord. Not expressed in developing retina, inner ear, dorsal root ganglia, trigeminal ganglia and glossopharyngeal ganglia.

The protein resides in the nucleus. Its function is as follows. Transcription factor that, in osteoblasts, activates the decoy receptor for RANKL, TNFRSF11B, which in turn regulates osteoclast differentiation. Acts in synergy with the Wnt-responsive LEF1/CTNNB1 pathway. Recognizes variations of the palindromic sequence 5'-ATTCCCNNGGGAATT-3'. This Mus musculus (Mouse) protein is Transcription factor COE2 (Ebf2).